The sequence spans 644 residues: Translation factor GUF1, mitochondrial (644 aa).

The N-terminal 14 residues, 1 to 14, are a transit peptide targeting the mitochondrion; the sequence is MLRKAFRYLVPVRC. One can recognise a tr-type G domain in the interval 46-227; sequence ERYRNFSIVA…AIVDRIPPPT (182 aa). GTP contacts are provided by residues 55-62, 120-124, and 174-177; these read AHVDHGKS, DTPGH, and NKID.

It belongs to the TRAFAC class translation factor GTPase superfamily. Classic translation factor GTPase family. LepA subfamily.

The protein resides in the mitochondrion inner membrane. It carries out the reaction GTP + H2O = GDP + phosphate + H(+). Functionally, promotes mitochondrial protein synthesis. May act as a fidelity factor of the translation reaction, by catalyzing a one-codon backward translocation of tRNAs on improperly translocated ribosomes. Binds to mitochondrial ribosomes in a GTP-dependent manner. The polypeptide is Translation factor GUF1, mitochondrial (Eremothecium gossypii (strain ATCC 10895 / CBS 109.51 / FGSC 9923 / NRRL Y-1056) (Yeast)).